Consider the following 171-residue polypeptide: MLVNFILRCGLLLVTLSLAIAKHKQSSFTKSCYPRGTLSQAVDALYIKAAWLKATIPEDRIKNIRLLKKKTKKQFMKNCQFQEQLLSFFMEDVFGQLQLQGCKKIRFVEDFHSLRQKLSHCISCASSAREMKSITRMKRIFYRIGNKGIYKAISELDILLSWIKKLLESSQ.

The N-terminal stretch at 1–21 is a signal peptide; the sequence is MLVNFILRCGLLLVTLSLAIA.

Belongs to the IL-10 family. As to quaternary structure, homodimer. Expressed in HVS transformed T-cells but not other T-cell lines or primary stimulated T-cells. Expressed in colonic T-cells including Th17 inflammatory T-cells; the expression is significantly increased in serum of patients with Crohn's disease (at protein level).

It localises to the secreted. Its function is as follows. May play a role in local mechanisms of mucosal immunity and seems to have a pro-inflammatory function. May play a role in inflammatory bowel disease. Activates STAT1 and STAT3, MAPK1/3 (ERK1/2), JUN and AKT. Induces expression of SOCS3, TNF-alpha and IL-8, secretion of IL-8 and IL-10 and surface expression of ICAM1. Decreases proliferation of intestinal epithelial cells. Is inhibited by heparin. This Homo sapiens (Human) protein is Interleukin-26 (IL26).